Consider the following 681-residue polypeptide: DNA-directed RNA polymerase subunit beta' (681 aa).

Cys-69, Cys-71, Cys-87, and Cys-90 together coordinate Zn(2+). Mg(2+) is bound by residues Asp-489, Asp-491, and Asp-493.

Belongs to the RNA polymerase beta' chain family. RpoC1 subfamily. In terms of assembly, in plastids the minimal PEP RNA polymerase catalytic core is composed of four subunits: alpha, beta, beta', and beta''. When a (nuclear-encoded) sigma factor is associated with the core the holoenzyme is formed, which can initiate transcription. Mg(2+) is required as a cofactor. Zn(2+) serves as cofactor.

The protein localises to the plastid. The protein resides in the chloroplast. It catalyses the reaction RNA(n) + a ribonucleoside 5'-triphosphate = RNA(n+1) + diphosphate. Its function is as follows. DNA-dependent RNA polymerase catalyzes the transcription of DNA into RNA using the four ribonucleoside triphosphates as substrates. In Nicotiana tomentosiformis (Tobacco), this protein is DNA-directed RNA polymerase subunit beta'.